Reading from the N-terminus, the 810-residue chain is MTEQRRSPNKRANKPPALSGLSSRTGRLPASALRPLVLAMAGLSVGAHAQMSSSAVPDIDQTESVVETAPEVPLAPPVSGELVPRLAEPAKTTQPGESPPAFVSGDRLTGYNERGVVLEGNAELRRGGAVVKGDKLTYDQDTDEAFAHGNARVSRGGALAVGPEARMKVEANEGYMLSPDYYFQQTGGTGKAERIDFIDKDRSVIKRATYTTCSPDNADWYFSARQLDLDSDREVGVAYGGVLHFFDVPIAGAPVFSFPLTDERRSGFLSPLFGYGSKSGLDVTLPYYFNIAPNRDLTLYPRIMTSRGFMLGGDYRYIGQGYSGRLRAEILPDDRQTNSNRWSYSFQHTQNLAKGLNAYLNLNRVSDDRYPDDLTRTVAQSTQRQYIQEGGVTYNWQDFTVLARVQKFQTLLPSGPSYEREPQLNGKYIRYDLGGFDVQVEADYTRFRIPLTSTGFQQPQGERMFVQPTISYPIVRPGWYATPKVIFNATQYQMEPQSNTPTAQNNFSRTVPTFSFDSGMTFERDAPTMSRVFGVNYLQTLEPRLFYVYTPFRDQSQFPLFDTVQSDFGYGQIFSENPFTGYDRVADNNKLTAGLTTRLIEADTGIERFRGTIAQRYDFSGQRVQINGTLPDPKAGSSDLLAATTIQLFRGYYLDAGIQYNPDSEHINYSNLAFAWRPEPRKLLNVGYRYRRATSVTDNTAIDQFEISGQWPITQRAYGIGRFAFDRNANQMVDALAGLEYAADCWVGRVVYQRYRNTTQGYTGRIFLQVEFRGLSKIGSNPLDILRLNVPGYEPVTAKPVPTTQFDHYE.

Disordered regions lie at residues 1–26 (MTEQ…SRTG) and 54–79 (SAVP…PPVS). The N-terminal stretch at 1-49 (MTEQRRSPNKRANKPPALSGLSSRTGRLPASALRPLVLAMAGLSVGAHA) is a signal peptide.

This sequence belongs to the LptD family. As to quaternary structure, component of the lipopolysaccharide transport and assembly complex. Interacts with LptE and LptA.

It localises to the cell outer membrane. Its function is as follows. Together with LptE, is involved in the assembly of lipopolysaccharide (LPS) at the surface of the outer membrane. This Cupriavidus pinatubonensis (strain JMP 134 / LMG 1197) (Cupriavidus necator (strain JMP 134)) protein is LPS-assembly protein LptD.